We begin with the raw amino-acid sequence, 392 residues long: General receptor for phosphoinositides 1-associated scaffold protein (392 aa).

The interval 1-50 (MTLRRLRKLQQKEEATAAPDPAGRAPDSEAARAAPLPSGPPAAAAPPGAP) is disordered. Over residues 37 to 49 (PSGPPAAAAPPGA) the composition is skewed to pro residues. Thr-76 bears the Phosphothreonine mark. Ser-93 is modified (phosphoserine). The 90-residue stretch at 100–189 (VLTLEKGDNQ…VLRLETLYGT (90 aa)) folds into the PDZ domain. The tract at residues 180 to 257 (VLRLETLYGT…GAGLLPGSLP (78 aa)) is interaction with PSCD3. A Phosphotyrosine modification is found at Tyr-236. Arg-269 carries the omega-N-methylarginine modification. Residues 294–315 (PQALPPPPPPARALGPSSAETP) are disordered. Ser-384 is subject to Phosphoserine.

As to quaternary structure, heteromer. Composed of TAMALIN, CYTH2 and at least one GRM1. Also interacts with GRM2, GRM3 and GRM5. Interacts with CYTH3. In terms of tissue distribution, highly expressed in brain, heart and lung, and to a lower extent in embryo, kidney and ovary.

Its subcellular location is the cytoplasm. It localises to the perinuclear region. It is found in the cell membrane. The protein resides in the postsynaptic cell membrane. Plays a role in intracellular trafficking and contributes to the macromolecular organization of group 1 metabotropic glutamate receptors (mGluRs) at synapses. This is General receptor for phosphoinositides 1-associated scaffold protein from Mus musculus (Mouse).